Consider the following 375-residue polypeptide: Trichodiene synthase (375 aa).

This sequence belongs to the trichodiene synthase family.

It carries out the reaction (2E,6E)-farnesyl diphosphate = trichodiene + diphosphate. The protein operates within sesquiterpene biosynthesis; trichothecene biosynthesis. Its function is as follows. TS is a member of the terpene cyclase group of enzymes. It catalyzes the isomerization and cyclization of farnesyl pyro-phosphate to form trichodiene, the first cyclic intermediate in the biosynthetic pathway for trichothecenes. It serves to branch trichothecene biosynthesis from the isoprenoid pathway. The sequence is that of Trichodiene synthase (TRI5) from Fusarium culmorum.